Here is a 173-residue protein sequence, read N- to C-terminus: ATP synthase subunit delta (173 aa).

Belongs to the ATPase delta chain family. As to quaternary structure, F-type ATPases have 2 components, F(1) - the catalytic core - and F(0) - the membrane proton channel. F(1) has five subunits: alpha(3), beta(3), gamma(1), delta(1), epsilon(1). F(0) has three main subunits: a(1), b(2) and c(10-14). The alpha and beta chains form an alternating ring which encloses part of the gamma chain. F(1) is attached to F(0) by a central stalk formed by the gamma and epsilon chains, while a peripheral stalk is formed by the delta and b chains.

The protein resides in the cell inner membrane. In terms of biological role, f(1)F(0) ATP synthase produces ATP from ADP in the presence of a proton or sodium gradient. F-type ATPases consist of two structural domains, F(1) containing the extramembraneous catalytic core and F(0) containing the membrane proton channel, linked together by a central stalk and a peripheral stalk. During catalysis, ATP synthesis in the catalytic domain of F(1) is coupled via a rotary mechanism of the central stalk subunits to proton translocation. Its function is as follows. This protein is part of the stalk that links CF(0) to CF(1). It either transmits conformational changes from CF(0) to CF(1) or is implicated in proton conduction. The polypeptide is ATP synthase subunit delta (Campylobacter jejuni subsp. jejuni serotype O:2 (strain ATCC 700819 / NCTC 11168)).